The sequence spans 190 residues: GTP cyclohydrolase 1 1 (190 aa).

The protein belongs to the GTP cyclohydrolase I family. In terms of assembly, homomer.

The enzyme catalyses GTP + H2O = 7,8-dihydroneopterin 3'-triphosphate + formate + H(+). It functions in the pathway cofactor biosynthesis; 7,8-dihydroneopterin triphosphate biosynthesis; 7,8-dihydroneopterin triphosphate from GTP: step 1/1. In Pseudomonas putida (strain ATCC 47054 / DSM 6125 / CFBP 8728 / NCIMB 11950 / KT2440), this protein is GTP cyclohydrolase 1 1.